We begin with the raw amino-acid sequence, 98 residues long: Cell division topological specificity factor (98 aa).

This sequence belongs to the MinE family.

Prevents the cell division inhibition by proteins MinC and MinD at internal division sites while permitting inhibition at polar sites. This ensures cell division at the proper site by restricting the formation of a division septum at the midpoint of the long axis of the cell. The chain is Cell division topological specificity factor from Moorella thermoacetica (strain ATCC 39073 / JCM 9320).